A 495-amino-acid chain; its full sequence is UDP-glycosyltransferase 73C9 (495 aa).

Residue Gly-23 to Ile-26 participates in UDP-alpha-D-glucose binding. Catalysis depends on His-24, which acts as the Proton acceptor. The active-site Charge relay is the Asp-129. UDP-alpha-D-glucose contacts are provided by residues Trp-355–Gln-358, His-373–Glu-381, and Asp-397–Gln-398.

The protein belongs to the UDP-glycosyltransferase family.

Its function is as follows. Possesses very weak glucosyltransferase activity toward 2,4,5-trichlorophenol (TCP), when assayed with high concentrations of TCP. The protein is UDP-glycosyltransferase 73C9 of Barbarea vulgaris (Yellow rocket).